The chain runs to 295 residues: MRKVKVAILGSGNIGTDLMIKLGRSPILELTSMIGIDPDSDGLRRAKAAGYYVFDGGLQPFLESGAELADIVFDATSAKAHILHAKALREAGKFAIDLTPAAVGPYVVPSVNLGAHLNETNINLITCGGQATIPIVHAIGSVSPVSYAEIVATISSKSAGPGTRSNIDEFTETTAQGIEAIGGAKKGKAIIILNPAEPPILMRDTVYAVVDEGADRQAIVKAIHQTVAYIQSYVPGYRLRSEPIFDENKITVFFEVEGAGNYLPTYSGNLDIMTATAVKVAEEYAKYVVGIGTSM.

11–14 (SGNI) serves as a coordination point for NAD(+). The active-site Acyl-thioester intermediate is the C127. Residues 158–166 (SAGPGTRSN) and N269 contribute to the NAD(+) site.

Belongs to the acetaldehyde dehydrogenase family.

It catalyses the reaction acetaldehyde + NAD(+) + CoA = acetyl-CoA + NADH + H(+). The sequence is that of Acetaldehyde dehydrogenase from Brevibacillus brevis (strain 47 / JCM 6285 / NBRC 100599).